The chain runs to 538 residues: Cytochrome P450 18a1 (538 aa).

Residues 24 to 44 (QHLLMVFLGLLALVTLLQWLV) form a helical membrane-spanning segment. C466 is a heme binding site.

The protein belongs to the cytochrome P450 family. Requires heme as cofactor. Expressed in body wall (epidermal and muscle cells) and mid- and hind-gut.

The protein localises to the endoplasmic reticulum membrane. The protein resides in the microsome membrane. Its function is as follows. Probably involved in steroid hormones biosynthesis. In Drosophila melanogaster (Fruit fly), this protein is Cytochrome P450 18a1 (Cyp18a1).